The following is a 520-amino-acid chain: MKTDIHSQKILILDFGSQYTQLIARRVREAHVFCELHPFDMEMAAIRAFNPSGIILSGGPKSVYEPGAPAVAEELFELGVPVLGICYGMQLMSRHFGGEVVPAGKREFGHAELLCSGQPGQLFDGFFVGGASPVWMSHGDHVSRVPDGFQVVAYTENAPVCAIQDVSRNLYGVQFHPEVNHTPRGDQLIDTFVRAICGCTGHWTPGQIIEDAVTRIQEQVGSERVILGLSGGVDSSVAAALIHRAIGDQLTCVFVDNGLLRLEEGDQVMRTFAENLGVKVIRVNAEERFLSALAGESDPEKKRKIIGSLFVEIFDEESNRIEDARWLAQGTIYPDVIESAGAKTGKAHNIKSHHNVGGLPEYMKLKLLEPLRELFKDEVRAIGEELGLPHQMVWRHPFPGPGLAVRILGEVKKEYADILRRADAIFIEELYSSDHYHKISQAFAVFLPVKSVGVMGDGRTYEYVVALRAVETKDFMTASWYPLPYEDMARISARIINEVKGVNRVVYDISSKPPATIEWE.

Positions 9 to 202 constitute a Glutamine amidotransferase type-1 domain; that stretch reads KILILDFGSQ…VRAICGCTGH (194 aa). Cys-86 serves as the catalytic Nucleophile. Active-site residues include His-176 and Glu-178. In terms of domain architecture, GMPS ATP-PPase spans 203 to 395; that stretch reads WTPGQIIEDA…LGLPHQMVWR (193 aa). 230–236 is a binding site for ATP; sequence SGGVDSS.

Homodimer.

It catalyses the reaction XMP + L-glutamine + ATP + H2O = GMP + L-glutamate + AMP + diphosphate + 2 H(+). The protein operates within purine metabolism; GMP biosynthesis; GMP from XMP (L-Gln route): step 1/1. Catalyzes the synthesis of GMP from XMP. In Pelobacter propionicus (strain DSM 2379 / NBRC 103807 / OttBd1), this protein is GMP synthase [glutamine-hydrolyzing].